Consider the following 600-residue polypeptide: Elongation factor 4 (600 aa).

Residues 6–188 (QFIRNFSIIA…QITKQIPSPK (183 aa)) form the tr-type G domain. GTP contacts are provided by residues 18–23 (DHGKST) and 135–138 (NKID).

The protein belongs to the TRAFAC class translation factor GTPase superfamily. Classic translation factor GTPase family. LepA subfamily.

It localises to the cell inner membrane. It carries out the reaction GTP + H2O = GDP + phosphate + H(+). Its function is as follows. Required for accurate and efficient protein synthesis under certain stress conditions. May act as a fidelity factor of the translation reaction, by catalyzing a one-codon backward translocation of tRNAs on improperly translocated ribosomes. Back-translocation proceeds from a post-translocation (POST) complex to a pre-translocation (PRE) complex, thus giving elongation factor G a second chance to translocate the tRNAs correctly. Binds to ribosomes in a GTP-dependent manner. This Leptospira interrogans serogroup Icterohaemorrhagiae serovar copenhageni (strain Fiocruz L1-130) protein is Elongation factor 4.